A 43-amino-acid polypeptide reads, in one-letter code: uncharacterized protein (43 aa).

This is an uncharacterized protein from Escherichia coli (Bacteriophage T4).